A 555-amino-acid chain; its full sequence is Glucose-6-phosphate isomerase (555 aa).

Residue E353 is the Proton donor of the active site. Active-site residues include H384 and K516.

The protein belongs to the GPI family.

It is found in the cytoplasm. The catalysed reaction is alpha-D-glucose 6-phosphate = beta-D-fructose 6-phosphate. Its pathway is carbohydrate biosynthesis; gluconeogenesis. It functions in the pathway carbohydrate degradation; glycolysis; D-glyceraldehyde 3-phosphate and glycerone phosphate from D-glucose: step 2/4. Its function is as follows. Catalyzes the reversible isomerization of glucose-6-phosphate to fructose-6-phosphate. This chain is Glucose-6-phosphate isomerase, found in Methylobacillus flagellatus (strain ATCC 51484 / DSM 6875 / VKM B-1610 / KT).